Consider the following 335-residue polypeptide: SAM pointed domain-containing Ets transcription factor (335 aa).

The span at 1 to 20 (MGSASPGLSSVSPSHLLLPP) shows a compositional bias: low complexity. 2 disordered regions span residues 1–25 (MGSA…TVSR) and 75–100 (AKAP…DSQA). Positions 129-213 (EVLKDIETAC…AHLDIWKSAA (85 aa)) constitute a PNT domain. A DNA-binding region (ETS) is located at residues 249–332 (IHLWQFLKEL…ISQRLVYQFV (84 aa)).

Belongs to the ETS family. Interacts with the DNA-binding domain of the androgen receptor. Interacts with NKX3-1. Expressed in a very restricted set of primarily hormone-regulated epithelial tissues with particularly high expression in the prostate gland. Significantly lower expression is seen in other hormone regulated tissues such as mammary gland, salivary gland, and ovary. Expressed in prostate carcinoma cells.

It is found in the nucleus. In terms of biological role, may function as an androgen-independent transactivator of the prostate-specific antigen (PSA) promoter. Binds to 5'-GGAT-3' DNA sequences. May play a role in the regulation of the prostate gland and/or prostate cancer development. Acts as a transcriptional activator for SERPINB5 promoter. The sequence is that of SAM pointed domain-containing Ets transcription factor (SPDEF) from Homo sapiens (Human).